We begin with the raw amino-acid sequence, 268 residues long: Small ribosomal subunit protein uS10m (268 aa).

Residues Met1–Lys64 constitute a mitochondrion transit peptide.

It belongs to the universal ribosomal protein uS10 family. In terms of assembly, component of the mitochondrial small ribosomal subunit (mt-SSU). Mature N.crassa 74S mitochondrial ribosomes consist of a small (37S) and a large (54S) subunit. The 37S small subunit contains a 16S ribosomal RNA (16S mt-rRNA) and 32 different proteins. The 54S large subunit contains a 23S rRNA (23S mt-rRNA) and 42 different proteins.

The protein resides in the mitochondrion. In terms of biological role, component of the mitochondrial ribosome (mitoribosome), a dedicated translation machinery responsible for the synthesis of mitochondrial genome-encoded proteins, including at least some of the essential transmembrane subunits of the mitochondrial respiratory chain. The mitoribosomes are attached to the mitochondrial inner membrane and translation products are cotranslationally integrated into the membrane. This chain is Small ribosomal subunit protein uS10m (mrp-10), found in Neurospora crassa (strain ATCC 24698 / 74-OR23-1A / CBS 708.71 / DSM 1257 / FGSC 987).